The chain runs to 445 residues: DDB1- and CUL4-associated factor 13 (445 aa).

The residue at position 49 (lysine 49) is an N6-acetyllysine. WD repeat units lie at residues 64–104 (GHRD…CIRT), 107–146 (AHEGFVRGICTRFCGTSFFTVGDDKTVKQWKMDGPGYGDE), 149–191 (PLHT…PICS), 194–234 (WGFD…PLKK), 236–276 (ILDM…TPVM), 280–319 (DHVSAVLDVDYSPTGKEFVSASFDKSIRIFPVDKSRSREV), and 323–362 (KRMQHVICVKWTSDSKYIMCGSDEMNIRLWKANASEKLGV). The interval 353–441 (KANASEKLGV…LVSEKKKHVV (89 aa)) is required for nucleolar location.

This sequence belongs to the WD repeat DCAF13/WDSOF1 family. Part of the small subunit (SSU) processome, composed of more than 70 proteins and the RNA chaperone small nucleolar RNA (snoRNA) U3. Component of the DCX(DCAF13) E3 ubiquitin ligase complex, at least composed of CUL4 (CUL4A or CUL4B), DDB1, DCAF13 and RBX1. Interacts (via WD40 domain) with DDB1. Interacts with ESR1 and LATS1. Expressed in the endometrium during decidualization. Expression is down-regulated in preeclampsia decidual tissues.

Its subcellular location is the nucleus. It is found in the nucleolus. The protein operates within protein modification; protein ubiquitination. Part of the small subunit (SSU) processome, first precursor of the small eukaryotic ribosomal subunit. During the assembly of the SSU processome in the nucleolus, many ribosome biogenesis factors, an RNA chaperone and ribosomal proteins associate with the nascent pre-rRNA and work in concert to generate RNA folding, modifications, rearrangements and cleavage as well as targeted degradation of pre-ribosomal RNA by the RNA exosome. Participates in the 18S rRNA processing in growing oocytes, being essential for oocyte nonsurrounded nucleolus (NSN) to surrounded nucleolus (SN) transition. In terms of biological role, substrate-recognition component of a DCX (DDB1-CUL4-X-box) E3 ubiquitin-protein ligase complex that plays a key role in embryo preimplantation and is required for normal meiotic cycle progression in oocytes. Acts as a maternal factor that regulates oocyte and zygotic chromatin tightness during maternal to zygotic transition. Also involved in the transformation of the endometrium into the decidua, known as decidualization, providing a solid foundation for implantation of blastocysts. Recognizes the histone methyltransferases SUV39H1 and SUV39H2 and directs them to polyubiquitination and proteasomal degradation, which facilitates the H3K9me3 removal and early zygotic gene expression, essential steps for progressive genome reprogramming and the establishment of pluripotency during preimplantation embryonic development. Supports the spindle assembly and chromosome condensation during oocyte meiotic division by targeting the polyubiquitination and degradation of PTEN, a lipid phosphatase that inhibits PI3K pathway as well as oocyte growth and maturation. Targets PMP22 for polyubiquitination and proteasomal degradation. This is DDB1- and CUL4-associated factor 13 from Homo sapiens (Human).